We begin with the raw amino-acid sequence, 397 residues long: Acetate kinase (397 aa).

A Mg(2+)-binding site is contributed by asparagine 8. An ATP-binding site is contributed by lysine 15. Arginine 89 is a binding site for substrate. The Proton donor/acceptor role is filled by aspartate 146. ATP contacts are provided by residues 206-210 (HLGNG), 281-283 (DLR), and 329-333 (GVGEN). Position 382 (glutamate 382) interacts with Mg(2+).

This sequence belongs to the acetokinase family. In terms of assembly, homodimer. Mg(2+) serves as cofactor. Requires Mn(2+) as cofactor.

It is found in the cytoplasm. It carries out the reaction acetate + ATP = acetyl phosphate + ADP. The protein operates within metabolic intermediate biosynthesis; acetyl-CoA biosynthesis; acetyl-CoA from acetate: step 1/2. Catalyzes the formation of acetyl phosphate from acetate and ATP. Can also catalyze the reverse reaction. The polypeptide is Acetate kinase (Bacillus cereus (strain ATCC 10987 / NRS 248)).